A 201-amino-acid chain; its full sequence is Twist-related protein 1 (201 aa).

The span at 1 to 18 (MMQDVSSSPVSPADDSLS) shows a compositional bias: low complexity. The disordered stretch occupies residues 1–106 (MMQDVSSSPV…GGGSPQSYEE (106 aa)). The segment covering 34 to 43 (RGGRKRRSSR) has biased composition (basic residues). Gly residues-rich tracts occupy residues 46–65 (AGGG…GGDE) and 80–100 (GCGG…GGGS). Residues 109-160 (TQRVMANVRERQRTQSLNEAFAALPKIIPTLPSDKLSKIQTLKLAARYIDFL) form the bHLH domain. The interval 162 to 190 (QVLQSDELDSKMASYVAHERLSYAFSVWR) is sufficient for transactivation activity.

Efficient DNA binding requires dimerization with another bHLH protein. Homodimer or heterodimer with E proteins such as TCF3. ID1 binds preferentially to TCF3 but does not interact efficiently with TWIST1 so ID1 levels control the amount of TCF3 available to dimerize with TWIST and thus determine the type of dimer formed.

It is found in the nucleus. Acts as a transcriptional regulator. Inhibits myogenesis by sequestrating E proteins, inhibiting trans-activation by MEF2, and inhibiting DNA-binding by MYOD1 through physical interaction. This interaction probably involves the basic domains of both proteins. Also represses expression of pro-inflammatory cytokines such as TNFA and IL1B. Regulates cranial suture patterning and fusion. Activates transcription as a heterodimer with E proteins. Regulates gene expression differentially, depending on dimer composition. Homodimers induce expression of FGFR2 and POSTN while heterodimers repress FGFR2 and POSTN expression and induce THBS1 expression. Heterodimerization is also required for osteoblast differentiation. Represses the activity of the circadian transcriptional activator: NPAS2-BMAL1 heterodimer. The chain is Twist-related protein 1 (TWIST1) from Pan troglodytes (Chimpanzee).